The following is a 338-amino-acid chain: Queuosine 5'-phosphate N-glycosylase/hydrolase (338 aa).

An N-acetylmethionine modification is found at M1. H51, F235, D237, D311, Y312, and D316 together coordinate queuine. The Nucleophile or transition state stabilizer role is filled by D237.

Belongs to the QNG1 protein family. As to expression, highly expressed in liver.

It carries out the reaction queuosine 5'-phosphate + H2O = queuine + D-ribose 5-phosphate. Functionally, catalyzes the hydrolysis of queuosine 5'-phosphate, releasing the nucleobase queuine (q). Is required for salvage of queuine from exogenous queuosine (Q) that is imported and then converted to queuosine 5'-phosphate intracellularly. This is Queuosine 5'-phosphate N-glycosylase/hydrolase from Mus musculus (Mouse).